A 272-amino-acid polypeptide reads, in one-letter code: Sordarin/hypoxysordarin biosynthesis cluster protein P (272 aa).

2 N-linked (GlcNAc...) asparagine glycosylation sites follow: N6 and N23. Transmembrane regions (helical) follow at residues 31 to 51 and 67 to 87; these read FLAS…LLFL and AYHM…VDLA. N208 carries N-linked (GlcNAc...) asparagine glycosylation.

The protein localises to the membrane. The protein operates within antibiotic biosynthesis. Its function is as follows. Part of the gene cluster that mediates the biosynthesis of sordarin and hypoxysordarin, glycoside antibiotics with a unique tetracyclic diterpene aglycone structure. First, the geranylgeranyl diphosphate synthase sdnC constructs GGDP from farnesyl diphosphate and isopentenyl diphosphate. The diterpene cyclase sdnA then catalyzes the cyclization of GGDP to afford cycloaraneosene. Cycloaraneosene is then hydroxylated four times by the putative cytochrome P450 monooxygenases sdnB, sdnE, sdnF and sdnH to give a hydroxylated cycloaraneosene derivative such as cycloaraneosene-8,9,13,19-tetraol. Although the order of the hydroxylations is unclear, at least C8, C9 and C13 of the cycloaraneosene skeleton are hydroxylated before the sordaricin formation. Dehydration of the 13-hydroxy group of the hydroxylated cycloaraneosene derivative might be catalyzed by an unassigned hypothetical protein such as sdnG and sdnP to construct the cyclopentadiene moiety. The FAD-dependent oxidoreductase sdnN is proposed to catalyze the oxidation at C9 of the hydroxylated cycloaraneosene derivative and also catalyze the Baeyer-Villiger oxidation to give the lactone intermediate. The presumed lactone intermediate would be hydrolyzed to give an acrolein moiety and a carboxylate moiety. Then, [4+2]cycloaddition would occur between the acrolein moiety and the cyclopentadiene moiety to give sordaricin. SdnN might also be involved in the [4+2]cycloaddition after the hypothesized oxidation to accommodate the oxidized product and prompt the [4+2]cycloaddition. GDP-6-deoxy-D-altrose may be biosynthesized from GDP-D-mannose by the putative GDP-mannose-4,6-dehydratase sdnI and the short-chain dehydrogenase sdnK. The glycosyltransferase sdnJ catalyzes the attachment of 6-deoxy-D-altrose onto the 19-hydroxy group of sordaricin to give 4'-O-demethylsordarin. The methyltransferase sdnD would complete the biosynthesis of sordarin. Sordarin can be further modified into hypoxysordarin. The unique acyl chain at the 3'-hydroxy group of hypoxysordarin would be constructed by an iterative type I PKS sdnO and the trans-acting polyketide methyltransferase sdnL. SdnL would be responsible for the introduction of an alpha-methyl group of the polyketide chain. Alternatively, the beta-lactamase-like protein sdnR might be responsible for the cleavage and transfer of the polyketide chain from the PKS sdnO to sordarin. Two putative cytochrome P450 monooxygenases, sdnQ and sdnT, might catalyze the epoxidations of the polyketide chain to complete the biosynthesis of hypoxysordarin. Transcriptional regulators sdnM and sdnS are presumably encoded for the transcriptional regulation of the expression of the sdn gene cluster. This Sordaria araneosa (Pleurage araneosa) protein is Sordarin/hypoxysordarin biosynthesis cluster protein P.